We begin with the raw amino-acid sequence, 332 residues long: Biotin synthase (332 aa).

The region spanning 53–282 (HFGKKVKLNM…TKEIRISGGR (230 aa)) is the Radical SAM core domain. [4Fe-4S] cluster-binding residues include Cys-71, Cys-75, and Cys-78. Residues Cys-115, Cys-147, Cys-207, and Arg-277 each coordinate [2Fe-2S] cluster.

The protein belongs to the radical SAM superfamily. Biotin synthase family. Homodimer. The cofactor is [4Fe-4S] cluster. Requires [2Fe-2S] cluster as cofactor.

It catalyses the reaction (4R,5S)-dethiobiotin + (sulfur carrier)-SH + 2 reduced [2Fe-2S]-[ferredoxin] + 2 S-adenosyl-L-methionine = (sulfur carrier)-H + biotin + 2 5'-deoxyadenosine + 2 L-methionine + 2 oxidized [2Fe-2S]-[ferredoxin]. The protein operates within cofactor biosynthesis; biotin biosynthesis; biotin from 7,8-diaminononanoate: step 2/2. Catalyzes the conversion of dethiobiotin (DTB) to biotin by the insertion of a sulfur atom into dethiobiotin via a radical-based mechanism. This chain is Biotin synthase, found in Bacillus mycoides (strain KBAB4) (Bacillus weihenstephanensis).